Here is a 547-residue protein sequence, read N- to C-terminus: GMP synthase [glutamine-hydrolyzing] (547 aa).

The Glutamine amidotransferase type-1 domain occupies 12-210; the sequence is KVLILDFGSQ…VLEIAGAKPD (199 aa). C89 acts as the Nucleophile in catalysis. Catalysis depends on residues H184 and E186. Residues 211 to 403 form the GMPS ATP-PPase domain; the sequence is WIMRDHIEEA…LGLPPEMVYR (193 aa). 238-244 lines the ATP pocket; the sequence is SGGVDSS.

In terms of assembly, homodimer.

The enzyme catalyses XMP + L-glutamine + ATP + H2O = GMP + L-glutamate + AMP + diphosphate + 2 H(+). It functions in the pathway purine metabolism; GMP biosynthesis; GMP from XMP (L-Gln route): step 1/1. In terms of biological role, catalyzes the synthesis of GMP from XMP. This is GMP synthase [glutamine-hydrolyzing] from Ralstonia nicotianae (strain ATCC BAA-1114 / GMI1000) (Ralstonia solanacearum).